We begin with the raw amino-acid sequence, 247 residues long: Eukaryotic translation initiation factor 6 (247 aa).

Serine 174 and serine 175 each carry phosphoserine; by CK1.

It belongs to the eIF-6 family. In terms of assembly, monomer. Associates with the 60S ribosomal subunit. In terms of processing, phosphorylation at Ser-174 and Ser-175 promotes nuclear export.

The protein resides in the cytoplasm. The protein localises to the nucleus. Its subcellular location is the nucleolus. Its function is as follows. Binds to the 60S ribosomal subunit and prevents its association with the 40S ribosomal subunit to form the 80S initiation complex in the cytoplasm. Is also involved in ribosome biogenesis. Associates with pre-60S subunits in the nucleus and is involved in its nuclear export. This is Eukaryotic translation initiation factor 6 (tif6) from Talaromyces stipitatus (strain ATCC 10500 / CBS 375.48 / QM 6759 / NRRL 1006) (Penicillium stipitatum).